A 215-amino-acid polypeptide reads, in one-letter code: Large ribosomal subunit protein uL4 (215 aa).

Positions 51–88 are disordered; that stretch reads KGMGEVSGTTKKPYRQKGTGNARQGSLRAPQFRTGGAV.

Belongs to the universal ribosomal protein uL4 family. As to quaternary structure, part of the 50S ribosomal subunit.

One of the primary rRNA binding proteins, this protein initially binds near the 5'-end of the 23S rRNA. It is important during the early stages of 50S assembly. It makes multiple contacts with different domains of the 23S rRNA in the assembled 50S subunit and ribosome. Functionally, forms part of the polypeptide exit tunnel. The chain is Large ribosomal subunit protein uL4 from Granulibacter bethesdensis (strain ATCC BAA-1260 / CGDNIH1).